The primary structure comprises 1529 residues: Myosin-11 (1529 aa).

The Myosin N-terminal SH3-like domain maps to I11–M60. The region spanning G65 to T735 is the Myosin motor domain. ATP contacts are provided by residues G159–T166 and N212–K220. 4 actin-binding regions span residues L498–F532, T534–V557, F592–L616, and L616–N638. 6 consecutive IQ domains span residues L738–S767, L761–A790, R786–V815, L809–A838, Q834–L863, and L857–E886. The stretch at T887–A1059 forms a coiled coil. The span at E993–A1027 shows a compositional bias: basic and acidic residues. 2 disordered regions span residues E993 to Q1031 and I1096 to K1115. Residues D1163–E1472 enclose the Dilute domain.

Belongs to the TRAFAC class myosin-kinesin ATPase superfamily. Myosin family. Plant myosin class XI subfamily. In terms of assembly, homodimer.

It localises to the cytoplasm. In terms of biological role, myosin heavy chain that is required for the cell cycle-regulated transport of various organelles and proteins for their segregation. Functions by binding with its tail domain to receptor proteins on organelles and exerting force with its N-terminal motor domain against actin filaments, thereby transporting its cargo along polarized actin cables. Involved in trafficking of Golgi stacks, mitochondria and peroxisomes. The chain is Myosin-11 (XI-E) from Arabidopsis thaliana (Mouse-ear cress).